Consider the following 159-residue polypeptide: Large ribosomal subunit protein uL11 (159 aa).

It belongs to the universal ribosomal protein uL11 family. As to quaternary structure, part of the ribosomal stalk of the 50S ribosomal subunit. Interacts with L10 and the large rRNA to form the base of the stalk. L10 forms an elongated spine to which L12 dimers bind in a sequential fashion forming a multimeric L10(L12)X complex.

In terms of biological role, forms part of the ribosomal stalk which helps the ribosome interact with GTP-bound translation factors. This Methanococcus maripaludis (strain C6 / ATCC BAA-1332) protein is Large ribosomal subunit protein uL11.